The following is a 539-amino-acid chain: Chaperonin GroEL (539 aa).

ATP-binding positions include 29–32, 86–90, glycine 413, 477–479, and aspartate 493; these read TLGP, DGTTT, and DAL.

Belongs to the chaperonin (HSP60) family. In terms of assembly, forms a cylinder of 14 subunits composed of two heptameric rings stacked back-to-back. Interacts with the co-chaperonin GroES.

It localises to the cytoplasm. It catalyses the reaction ATP + H2O + a folded polypeptide = ADP + phosphate + an unfolded polypeptide.. Together with its co-chaperonin GroES, plays an essential role in assisting protein folding. The GroEL-GroES system forms a nano-cage that allows encapsulation of the non-native substrate proteins and provides a physical environment optimized to promote and accelerate protein folding. The sequence is that of Chaperonin GroEL from Clostridium perfringens (strain ATCC 13124 / DSM 756 / JCM 1290 / NCIMB 6125 / NCTC 8237 / Type A).